A 493-amino-acid polypeptide reads, in one-letter code: Trichothecene 8-O-acetyltransferase (493 aa).

Over residues 180-191 (QDQNENEVQQPK) the composition is skewed to polar residues. Residues 180–199 (QDQNENEVQQPKNLPDPDEP) are disordered.

It functions in the pathway sesquiterpene biosynthesis; trichothecene biosynthesis. In terms of biological role, trichothecene 8-O-acetyltransferase; part of 2-gene cluster involved in trichothecene C-8 modification that mediates the biosynthesis of T2-toxin. The biosynthesis of trichothecenes begins with the cyclization of farnesyl diphosphate to trichodiene and is catalyzed by the trichodiene synthase TRI5. Trichodiene undergoes a series of oxygenations catalyzed by the cytochrome P450 monooxygenase TRI4. TRI4 controls the addition of four oxygens at C-2, C-3, C-11, and the C-12, C-13-epoxide to form the intermediate isotrichotriol. Isotrichotriol then undergoes a non-enzymatic isomerization and cyclization to form isotrichodermol. During this process, the oxygen at the C-2 position becomes the pyran ring oxygen and the hydroxyl group at C-11 is lost. More complex type A trichothecenes are built by modifying isotrichodermol through a series of paired hydroxylation and acetylation or acylation steps. Isotrichodermol is converted to isotrichodermin by the acetyltransferase TRI101. TRI101 encodes a C-3 transacetylase that acts as a self-protection or resistance factor during biosynthesis and that the presence of a free C-3 hydroxyl group is a key component of Fusarium trichothecene phytotoxicity. A second hydroxyl group is added to C-15 by the trichothecene C-15 hydroxylase TRI11, producing 15-decalonectrin, which is then acetylated by TRI3, producing calonectrin. A third hydroxyl group is added at C-4 by the cytochrome P450 monooxygenase TRI13, converting calonectrin to 3,15-diacetoxyspirpenol, which is subsequently acetylated bythe acetyltransferase TRI7. A fourth hydroxyl group is added to C-8 by the cytochrome P450 monooxygenase TRI1, followed by the addition of an isovaleryl moiety by TRI16. Finally, the acetyl group is removed from the C-3 position by the trichothecene C-3 esterase TRI8 to produce T-2 toxin. The sequence is that of Trichothecene 8-O-acetyltransferase from Fusarium sporotrichioides.